A 597-amino-acid chain; its full sequence is TOX high mobility group box family member 4 (597 aa).

2 disordered regions span residues 160–224 (GAIL…EPQK) and 520–546 (VQEESPPPQMDVELVSSSPPPSLSPQP). The segment covering 207–217 (KPKTPKKKKKK) has biased composition (basic residues). The Nuclear localization signal signature appears at 212 to 217 (KKKKKK). Positions 222-290 (PQKPLSAYAL…EYLKALALYK (69 aa)) form a DNA-binding region, HMG box.

In terms of assembly, component of the PNUTS-PP1 phosphatase complex.

The protein resides in the nucleus. It localises to the chromosome. In terms of biological role, transcription factor that modulates cell fate reprogramming from the somatic state to the pluripotent and neuronal fate. Also acts as a regulatory component of protein phosphatase 1 (PP1) complexes. Component of the PNUTS-PP1 protein phosphatase complex, a PP1 complex that regulates RNA polymerase II transcription pause-release. PNUTS-PP1 also plays a role in the control of chromatin structure and cell cycle progression during the transition from mitosis into interphase. The protein is TOX high mobility group box family member 4 (tox4) of Xenopus tropicalis (Western clawed frog).